A 457-amino-acid chain; its full sequence is Argininosuccinate lyase (457 aa).

Belongs to the lyase 1 family. Argininosuccinate lyase subfamily.

The protein resides in the cytoplasm. The catalysed reaction is 2-(N(omega)-L-arginino)succinate = fumarate + L-arginine. It functions in the pathway amino-acid biosynthesis; L-arginine biosynthesis; L-arginine from L-ornithine and carbamoyl phosphate: step 3/3. This Yersinia pseudotuberculosis serotype O:1b (strain IP 31758) protein is Argininosuccinate lyase.